The following is a 60-amino-acid chain: Large ribosomal subunit protein uL30 (60 aa).

It belongs to the universal ribosomal protein uL30 family. In terms of assembly, part of the 50S ribosomal subunit.

This is Large ribosomal subunit protein uL30 from Ligilactobacillus salivarius (strain UCC118) (Lactobacillus salivarius).